A 436-amino-acid chain; its full sequence is Tol-Pal system protein TolB (436 aa).

A signal peptide spans 1 to 28 (MEMLRRNFFRLLMVLVAGCGLIASPAKA).

Belongs to the TolB family. The Tol-Pal system is composed of five core proteins: the inner membrane proteins TolA, TolQ and TolR, the periplasmic protein TolB and the outer membrane protein Pal. They form a network linking the inner and outer membranes and the peptidoglycan layer.

Its subcellular location is the periplasm. In terms of biological role, part of the Tol-Pal system, which plays a role in outer membrane invagination during cell division and is important for maintaining outer membrane integrity. This Sinorhizobium medicae (strain WSM419) (Ensifer medicae) protein is Tol-Pal system protein TolB.